A 262-amino-acid chain; its full sequence is Acyl-[acyl-carrier-protein]--UDP-N-acetylglucosamine O-acyltransferase (262 aa).

This sequence belongs to the transferase hexapeptide repeat family. LpxA subfamily. Homotrimer.

It is found in the cytoplasm. The catalysed reaction is a (3R)-hydroxyacyl-[ACP] + UDP-N-acetyl-alpha-D-glucosamine = a UDP-3-O-[(3R)-3-hydroxyacyl]-N-acetyl-alpha-D-glucosamine + holo-[ACP]. Its pathway is glycolipid biosynthesis; lipid IV(A) biosynthesis; lipid IV(A) from (3R)-3-hydroxytetradecanoyl-[acyl-carrier-protein] and UDP-N-acetyl-alpha-D-glucosamine: step 1/6. Involved in the biosynthesis of lipid A, a phosphorylated glycolipid that anchors the lipopolysaccharide to the outer membrane of the cell. In Histophilus somni (strain 129Pt) (Haemophilus somnus), this protein is Acyl-[acyl-carrier-protein]--UDP-N-acetylglucosamine O-acyltransferase.